The following is a 510-amino-acid chain: Guanosine import ATP-binding protein NupO (510 aa).

ABC transporter domains are found at residues 5–240 (IEML…VGRE) and 257–501 (LAID…AGST). An ATP-binding site is contributed by 37 to 44 (GENGAGKS).

The protein belongs to the ABC transporter superfamily. The complex is composed of two ATP-binding proteins (NupO), two transmembrane proteins (NupP and NupQ) and a solute-binding protein (NupN).

The protein resides in the cell membrane. Its function is as follows. Part of an ABC transporter complex involved in the uptake of guanosine. Responsible for energy coupling to the transport system. May be a nucleoside transporter of broad specificity but with various affinities for different substrates. The protein is Guanosine import ATP-binding protein NupO of Bacillus subtilis (strain 168).